The primary structure comprises 238 residues: ATP synthase subunit a (238 aa).

5 consecutive transmembrane segments (helical) span residues 15 to 35 (IFNL…FVFI), 76 to 96 (YSLF…LGLM), 111 to 131 (PTAN…LTHI), 167 to 187 (LALR…LLLL), and 208 to 230 (AFSV…VYLG).

It belongs to the ATPase A chain family. F-type ATPases have 2 components, CF(1) - the catalytic core - and CF(0) - the membrane proton channel. CF(1) has five subunits: alpha(3), beta(3), gamma(1), delta(1), epsilon(1). CF(0) has three main subunits: a(1), b(2) and c(9-12). The alpha and beta chains form an alternating ring which encloses part of the gamma chain. CF(1) is attached to CF(0) by a central stalk formed by the gamma and epsilon chains, while a peripheral stalk is formed by the delta and b chains.

The protein localises to the cell membrane. Functionally, key component of the proton channel; it plays a direct role in the translocation of protons across the membrane. This Streptococcus pneumoniae serotype 19F (strain G54) protein is ATP synthase subunit a.